The chain runs to 433 residues: Histidine--tRNA ligase (433 aa).

Belongs to the class-II aminoacyl-tRNA synthetase family. As to quaternary structure, homodimer.

It is found in the cytoplasm. It carries out the reaction tRNA(His) + L-histidine + ATP = L-histidyl-tRNA(His) + AMP + diphosphate + H(+). This is Histidine--tRNA ligase from Pseudothermotoga lettingae (strain ATCC BAA-301 / DSM 14385 / NBRC 107922 / TMO) (Thermotoga lettingae).